We begin with the raw amino-acid sequence, 186 residues long: Adenine phosphoribosyltransferase (186 aa).

This sequence belongs to the purine/pyrimidine phosphoribosyltransferase family. Homodimer.

It localises to the cytoplasm. The catalysed reaction is AMP + diphosphate = 5-phospho-alpha-D-ribose 1-diphosphate + adenine. It functions in the pathway purine metabolism; AMP biosynthesis via salvage pathway; AMP from adenine: step 1/1. Its function is as follows. Catalyzes a salvage reaction resulting in the formation of AMP, that is energically less costly than de novo synthesis. In Xanthomonas campestris pv. campestris (strain B100), this protein is Adenine phosphoribosyltransferase.